Here is a 485-residue protein sequence, read N- to C-terminus: Cysteine--tRNA ligase (485 aa).

Cys27 provides a ligand contact to Zn(2+). Residues 29–39 carry the 'HIGH' region motif; it reads ITAYDFSHIGH. Residues Cys208, His233, and Glu237 each contribute to the Zn(2+) site. A 'KMSKS' region motif is present at residues 265–269; it reads KMSKS. Residue Lys268 coordinates ATP.

Belongs to the class-I aminoacyl-tRNA synthetase family. Monomer. Requires Zn(2+) as cofactor.

It is found in the cytoplasm. The catalysed reaction is tRNA(Cys) + L-cysteine + ATP = L-cysteinyl-tRNA(Cys) + AMP + diphosphate. This chain is Cysteine--tRNA ligase, found in Lawsonia intracellularis (strain PHE/MN1-00).